A 343-amino-acid polypeptide reads, in one-letter code: Heat-inducible transcription repressor HrcA (343 aa).

Belongs to the HrcA family.

Negative regulator of class I heat shock genes (grpE-dnaK-dnaJ and groELS operons). Prevents heat-shock induction of these operons. The protein is Heat-inducible transcription repressor HrcA of Clostridium botulinum (strain Eklund 17B / Type B).